The following is a 223-amino-acid chain: Thiamine-phosphate synthase (223 aa).

Residues 45-49 (QYREK) and Asn77 each bind 4-amino-2-methyl-5-(diphosphooxymethyl)pyrimidine. The Mg(2+) site is built by Asp78 and Asp97. 4-amino-2-methyl-5-(diphosphooxymethyl)pyrimidine is bound at residue Thr116. Residue 142-144 (SYT) participates in 2-[(2R,5Z)-2-carboxy-4-methylthiazol-5(2H)-ylidene]ethyl phosphate binding. Lys145 lines the 4-amino-2-methyl-5-(diphosphooxymethyl)pyrimidine pocket. Residues Gly173 and 193 to 194 (VT) contribute to the 2-[(2R,5Z)-2-carboxy-4-methylthiazol-5(2H)-ylidene]ethyl phosphate site.

The protein belongs to the thiamine-phosphate synthase family. Mg(2+) is required as a cofactor.

The catalysed reaction is 2-[(2R,5Z)-2-carboxy-4-methylthiazol-5(2H)-ylidene]ethyl phosphate + 4-amino-2-methyl-5-(diphosphooxymethyl)pyrimidine + 2 H(+) = thiamine phosphate + CO2 + diphosphate. It carries out the reaction 2-(2-carboxy-4-methylthiazol-5-yl)ethyl phosphate + 4-amino-2-methyl-5-(diphosphooxymethyl)pyrimidine + 2 H(+) = thiamine phosphate + CO2 + diphosphate. It catalyses the reaction 4-methyl-5-(2-phosphooxyethyl)-thiazole + 4-amino-2-methyl-5-(diphosphooxymethyl)pyrimidine + H(+) = thiamine phosphate + diphosphate. It functions in the pathway cofactor biosynthesis; thiamine diphosphate biosynthesis; thiamine phosphate from 4-amino-2-methyl-5-diphosphomethylpyrimidine and 4-methyl-5-(2-phosphoethyl)-thiazole: step 1/1. In terms of biological role, condenses 4-methyl-5-(beta-hydroxyethyl)thiazole monophosphate (THZ-P) and 2-methyl-4-amino-5-hydroxymethyl pyrimidine pyrophosphate (HMP-PP) to form thiamine monophosphate (TMP). This Dictyoglomus turgidum (strain DSM 6724 / Z-1310) protein is Thiamine-phosphate synthase.